The sequence spans 1033 residues: Tyrosine-protein kinase-like otk (1033 aa).

A signal peptide spans 1–22; the sequence is MTARMISIYGLVLASMMASVLA. The Extracellular segment spans residues 23–581; that stretch reads SSSRFQRLPQ…GGDGFLVTRA (559 aa). Ig-like C2-type domains follow at residues 25–114, 113–199, 251–365, 368–463, and 468–558; these read SRFQ…AKLS, LSVI…RVMS, PEDL…VPVS, PGVL…VAIN, and PKFS…VQLI. Asparagine 39 carries N-linked (GlcNAc...) asparagine glycosylation. 4 disulfide bridges follow: cysteine 46-cysteine 95, cysteine 137-cysteine 188, cysteine 276-cysteine 354, and cysteine 399-cysteine 447. N-linked (GlcNAc...) asparagine glycans are attached at residues asparagine 336, asparagine 417, asparagine 429, asparagine 444, asparagine 457, asparagine 512, and asparagine 524. Cysteine 490 and cysteine 542 form a disulfide bridge. The chain crosses the membrane as a helical span at residues 582–602; sequence VLITMTVALAYIVLVVGLMLW. Topologically, residues 603–1033 are cytoplasmic; it reads CRYRRQARKA…LSKAMQSAEK (431 aa). Disordered regions lie at residues 617–679 and 718–760; these read LSTK…KKSA and SPSD…KTSM. The segment covering 655 to 673 has biased composition (polar residues); sequence KSSGDAQKSDDTACSQQSR. Serine 678 carries the post-translational modification Phosphoserine. Residues 692–1028 form the Protein kinase; inactive domain; that stretch reads LSELIQIGRG…QLGAALSKAM (337 aa). A compositionally biased stretch (basic and acidic residues) spans 720–731; it reads SDKDADTEKQHS.

This sequence belongs to the protein kinase superfamily. Tyr protein kinase family. Insulin receptor subfamily. As to quaternary structure, interacts with plexA; component of a receptor complex that mediates the repulsive signaling in response to Semaphorin ligands.

The protein localises to the cell membrane. Its function is as follows. Acts as a calcium-dependent, homophilic cell adhesion molecule that regulates neural recognition during the development of the nervous system. Component of the repulsive Plexin signaling response to regulate motor axon guidance at the embryonic stage. Also component of a receptor complex that is required in the adult visual system to innervate the lamina layer; specific targeting of R1-R6 axons. This Drosophila yakuba (Fruit fly) protein is Tyrosine-protein kinase-like otk.